The chain runs to 278 residues: Polyamine aminopropyltransferase (278 aa).

Residues 5 to 238 (ELWFTEQQTP…GLWSFTMGSK (234 aa)) enclose the PABS domain. Residue Gln-34 coordinates S-methyl-5'-thioadenosine. Residues His-65 and Asp-89 each contribute to the spermidine site. S-methyl-5'-thioadenosine contacts are provided by residues Glu-109 and 140 to 141 (DG). Asp-158 (proton acceptor) is an active-site residue. Residue 158–161 (DSTD) participates in spermidine binding. Residue Pro-165 participates in S-methyl-5'-thioadenosine binding.

The protein belongs to the spermidine/spermine synthase family. As to quaternary structure, homodimer or homotetramer.

The protein localises to the cytoplasm. It catalyses the reaction S-adenosyl 3-(methylsulfanyl)propylamine + putrescine = S-methyl-5'-thioadenosine + spermidine + H(+). Its pathway is amine and polyamine biosynthesis; spermidine biosynthesis; spermidine from putrescine: step 1/1. Catalyzes the irreversible transfer of a propylamine group from the amino donor S-adenosylmethioninamine (decarboxy-AdoMet) to putrescine (1,4-diaminobutane) to yield spermidine. This Caldicellulosiruptor saccharolyticus (strain ATCC 43494 / DSM 8903 / Tp8T 6331) protein is Polyamine aminopropyltransferase.